Here is a 237-residue protein sequence, read N- to C-terminus: Ribonuclease PH (237 aa).

Residues R86 and 124–126 each bind phosphate; that span reads GTR.

The protein belongs to the RNase PH family. In terms of assembly, homohexameric ring arranged as a trimer of dimers.

The catalysed reaction is tRNA(n+1) + phosphate = tRNA(n) + a ribonucleoside 5'-diphosphate. Its function is as follows. Phosphorolytic 3'-5' exoribonuclease that plays an important role in tRNA 3'-end maturation. Removes nucleotide residues following the 3'-CCA terminus of tRNAs; can also add nucleotides to the ends of RNA molecules by using nucleoside diphosphates as substrates, but this may not be physiologically important. Probably plays a role in initiation of 16S rRNA degradation (leading to ribosome degradation) during starvation. This chain is Ribonuclease PH, found in Beijerinckia indica subsp. indica (strain ATCC 9039 / DSM 1715 / NCIMB 8712).